The primary structure comprises 125 residues: Natriuretic peptide GNP1 (125 aa).

An N-terminal signal peptide occupies residues 1–25; that stretch reads MDPRLVRAGSLVLLLALLVQDQGAA. Disordered stretches follow at residues 23–78 and 105–125; these read GAAH…PAFK and VSGMGCNKFDPNKGSSSTGKK. Residues 26–85 constitute a propeptide that is removed on maturation; sequence HPARAGQKYKPLIRRSEEDSQALGQEGDVAARAADEEEDAAGPGDALRQPAFKTLLASRE. Cys-94 and Cys-110 are joined by a disulfide.

This sequence belongs to the natriuretic peptide family. Expressed by the venom gland.

The protein localises to the secreted. Functionally, exhibits natriuretic and vasodepressor activity. Acts by stimulating cGMP. The polypeptide is Natriuretic peptide GNP1 (Varanus varius (Lace monitor lizard)).